The following is a 232-amino-acid chain: tRNA1(Val) (adenine(37)-N6)-methyltransferase (232 aa).

Belongs to the methyltransferase superfamily. tRNA (adenine-N(6)-)-methyltransferase family.

The protein localises to the cytoplasm. The enzyme catalyses adenosine(37) in tRNA1(Val) + S-adenosyl-L-methionine = N(6)-methyladenosine(37) in tRNA1(Val) + S-adenosyl-L-homocysteine + H(+). Functionally, specifically methylates the adenine in position 37 of tRNA(1)(Val) (anticodon cmo5UAC). The polypeptide is tRNA1(Val) (adenine(37)-N6)-methyltransferase (Pseudoalteromonas translucida (strain TAC 125)).